A 144-amino-acid chain; its full sequence is Nucleoside diphosphate kinase (144 aa).

ATP contacts are provided by lysine 11, phenylalanine 59, arginine 87, threonine 93, arginine 104, and asparagine 114. Histidine 117 (pros-phosphohistidine intermediate) is an active-site residue.

The protein belongs to the NDK family. Homotetramer. It depends on Mg(2+) as a cofactor.

The protein resides in the cytoplasm. It carries out the reaction a 2'-deoxyribonucleoside 5'-diphosphate + ATP = a 2'-deoxyribonucleoside 5'-triphosphate + ADP. It catalyses the reaction a ribonucleoside 5'-diphosphate + ATP = a ribonucleoside 5'-triphosphate + ADP. Its function is as follows. Major role in the synthesis of nucleoside triphosphates other than ATP. The ATP gamma phosphate is transferred to the NDP beta phosphate via a ping-pong mechanism, using a phosphorylated active-site intermediate. The polypeptide is Nucleoside diphosphate kinase (Baumannia cicadellinicola subsp. Homalodisca coagulata).